Consider the following 211-residue polypeptide: 3-demethoxyubiquinol 3-hydroxylase (211 aa).

E60, E90, H93, E142, E174, and H177 together coordinate Fe cation.

The protein belongs to the COQ7 family. Fe cation is required as a cofactor.

It localises to the cell membrane. It catalyses the reaction a 5-methoxy-2-methyl-3-(all-trans-polyprenyl)benzene-1,4-diol + AH2 + O2 = a 3-demethylubiquinol + A + H2O. It participates in cofactor biosynthesis; ubiquinone biosynthesis. Catalyzes the hydroxylation of 2-nonaprenyl-3-methyl-6-methoxy-1,4-benzoquinol during ubiquinone biosynthesis. This Francisella tularensis subsp. novicida (strain U112) protein is 3-demethoxyubiquinol 3-hydroxylase.